The following is a 104-amino-acid chain: Large ribosomal subunit protein bL21 (104 aa).

This sequence belongs to the bacterial ribosomal protein bL21 family. As to quaternary structure, part of the 50S ribosomal subunit. Contacts protein L20.

Its function is as follows. This protein binds to 23S rRNA in the presence of protein L20. In Gluconobacter oxydans (strain 621H) (Gluconobacter suboxydans), this protein is Large ribosomal subunit protein bL21.